The primary structure comprises 318 residues: MKPLNIIFAGTPDFAARHLQALLNSHHNVIGVYTQPDRPAGRGKKLTASPVKELAVANNIPVYQPGSLRKEPAQQELAALNADIMVVVAYGLILPKVVLDTPRLGCINVHGSILPRWRGAAPIQRALWAGDKETGVTVMQMDVGLDTGDMLLKTTLPIEDSDTSASLYEKLAEQGPVALLQALEGLVNGTLAAEKQDEALANYAEKLSKEEARLDWNKSAQQLWQEVRAFNPWPVSYFEHQGNTIKVWQTQVSETTSTAAPGTIISASKKGIEVATADGVLTLLNMQLPGKKPLNVADILNARGEWFSPNTRLANEAQ.

112–115 (SILP) contacts (6S)-5,6,7,8-tetrahydrofolate.

This sequence belongs to the Fmt family.

The enzyme catalyses L-methionyl-tRNA(fMet) + (6R)-10-formyltetrahydrofolate = N-formyl-L-methionyl-tRNA(fMet) + (6S)-5,6,7,8-tetrahydrofolate + H(+). In terms of biological role, attaches a formyl group to the free amino group of methionyl-tRNA(fMet). The formyl group appears to play a dual role in the initiator identity of N-formylmethionyl-tRNA by promoting its recognition by IF2 and preventing the misappropriation of this tRNA by the elongation apparatus. The polypeptide is Methionyl-tRNA formyltransferase (Shewanella baltica (strain OS195)).